A 122-amino-acid chain; its full sequence is Large ribosomal subunit protein uL14 (122 aa).

It belongs to the universal ribosomal protein uL14 family. As to quaternary structure, part of the 50S ribosomal subunit. Forms a cluster with proteins L3 and L19. In the 70S ribosome, L14 and L19 interact and together make contacts with the 16S rRNA in bridges B5 and B8.

Binds to 23S rRNA. Forms part of two intersubunit bridges in the 70S ribosome. This chain is Large ribosomal subunit protein uL14, found in Nitrosomonas eutropha (strain DSM 101675 / C91 / Nm57).